The primary structure comprises 88 residues: YcgL domain-containing protein NTHI1684 (88 aa).

Residues 1–85 (MLCAIYKSKK…QDDGLFNSLS (85 aa)) form the YcgL domain.

This is YcgL domain-containing protein NTHI1684 from Haemophilus influenzae (strain 86-028NP).